A 354-amino-acid polypeptide reads, in one-letter code: UDP-N-acetylglucosamine--N-acetylmuramyl-(pentapeptide) pyrophosphoryl-undecaprenol N-acetylglucosamine transferase (354 aa).

UDP-N-acetyl-alpha-D-glucosamine is bound by residues 15–17 (TGG), N127, R163, S191, I242, 261–266 (ALTVSE), and Q286.

The protein belongs to the glycosyltransferase 28 family. MurG subfamily.

Its subcellular location is the cell inner membrane. It carries out the reaction di-trans,octa-cis-undecaprenyl diphospho-N-acetyl-alpha-D-muramoyl-L-alanyl-D-glutamyl-meso-2,6-diaminopimeloyl-D-alanyl-D-alanine + UDP-N-acetyl-alpha-D-glucosamine = di-trans,octa-cis-undecaprenyl diphospho-[N-acetyl-alpha-D-glucosaminyl-(1-&gt;4)]-N-acetyl-alpha-D-muramoyl-L-alanyl-D-glutamyl-meso-2,6-diaminopimeloyl-D-alanyl-D-alanine + UDP + H(+). It functions in the pathway cell wall biogenesis; peptidoglycan biosynthesis. Functionally, cell wall formation. Catalyzes the transfer of a GlcNAc subunit on undecaprenyl-pyrophosphoryl-MurNAc-pentapeptide (lipid intermediate I) to form undecaprenyl-pyrophosphoryl-MurNAc-(pentapeptide)GlcNAc (lipid intermediate II). The protein is UDP-N-acetylglucosamine--N-acetylmuramyl-(pentapeptide) pyrophosphoryl-undecaprenol N-acetylglucosamine transferase of Pasteurella multocida (strain Pm70).